Reading from the N-terminus, the 462-residue chain is Malonyl-coenzyme:anthocyanin 5-O-glucoside-6'''-O-malonyltransferase (462 aa).

Residues His-167 and Asp-390 each act as proton acceptor in the active site.

This sequence belongs to the plant acyltransferase family. As to expression, detected in petals and sepals, and at lower levels in bracts and red stems.

It catalyses the reaction pelargonidin 3-O-(6-O-[(E)-caffeoyl]-beta-D-glucoside) 5-O-beta-D-glucoside + malonyl-CoA = 4'''-demalonylsalvianin + CoA. The protein operates within pigment biosynthesis; anthocyanin biosynthesis. Its activity is regulated as follows. Completely inhibited by 10 mM p-coumaric acid, this inhibition is rapid, reversible and non-competitive. Completely inhibited by 0.1 mM Cu(2+), 0.1 mM Hg(2+) and 10 mM caffeic acid. Partially inhibited by 5 mM N-ethylmaleimide, 1 mM diethylpyrocarbonate and 1 mM acetyl-CoA. Catalyzes the transfer of a malonyl group from malonyl-CoA to the 6'''-hydroxyl group of the 5-glucosyl moiety of anthocyanins. Active towards bisdemalonylsalvianin (pelargonidin 3-O-(6-caffeoyl-beta-D-glucoside) 5-O-beta-D-glucoside) and shisonin, but not towards nodemalonylsalvianin, salvianin, pelargonidin 3,5-diglucoside and delphinidin 3,5-diglucoside. This is Malonyl-coenzyme:anthocyanin 5-O-glucoside-6'''-O-malonyltransferase from Salvia splendens (Scarlet sage).